Reading from the N-terminus, the 476-residue chain is Eukaryotic translation initiation factor 3 subunit L (476 aa).

Residues 257 to 452 enclose the PCI domain; that stretch reads DAIRMFSHIL…DLDYALEKDL (196 aa).

The protein belongs to the eIF-3 subunit L family. Component of the eukaryotic translation initiation factor 3 (eIF-3) complex.

The protein resides in the cytoplasm. Its function is as follows. Component of the eukaryotic translation initiation factor 3 (eIF-3) complex, which is involved in protein synthesis of a specialized repertoire of mRNAs and, together with other initiation factors, stimulates binding of mRNA and methionyl-tRNAi to the 40S ribosome. The eIF-3 complex specifically targets and initiates translation of a subset of mRNAs involved in cell proliferation. In Emericella nidulans (strain FGSC A4 / ATCC 38163 / CBS 112.46 / NRRL 194 / M139) (Aspergillus nidulans), this protein is Eukaryotic translation initiation factor 3 subunit L.